A 335-amino-acid chain; its full sequence is Probable E3 ubiquitin-protein ligase BAH1-like (335 aa).

The region spanning 1–163 is the SPX domain; sequence MKFGETFTEY…SSENGKNFKL (163 aa). The RING-type zinc-finger motif lies at 231-280; sequence CAICLETVFNPYALKCGHIFCNSCACSAASVLIFQGIKAAPRHSKCPICR.

This sequence belongs to the RING-type zinc finger family.

It carries out the reaction S-ubiquitinyl-[E2 ubiquitin-conjugating enzyme]-L-cysteine + [acceptor protein]-L-lysine = [E2 ubiquitin-conjugating enzyme]-L-cysteine + N(6)-ubiquitinyl-[acceptor protein]-L-lysine.. The protein operates within protein modification; protein ubiquitination. The protein is Probable E3 ubiquitin-protein ligase BAH1-like (RF178) of Arabidopsis thaliana (Mouse-ear cress).